Reading from the N-terminus, the 1261-residue chain is Structural maintenance of chromosomes protein 3 (1261 aa).

Coiled coils occupy residues 188–332 (EKIQ…HSLQ) and 406–450 (LIAD…YEMD). One can recognise an SMC hinge domain in the interval 534 to 645 (NGYYGTVIEL…IIVRTLDQAA (112 aa)). 3 coiled-coil regions span residues 677-826 (KRSK…MDLM), 857-930 (NERR…DKIT), and 1023-1085 (RELE…ENRK). Positions 1159–1193 (LSGGQKSLVALAIIFSIQKCDPAPFYLFDEIDAAL) match the DA-box motif.

This sequence belongs to the SMC family. SMC3 subfamily. As to quaternary structure, component of the cohesin complex, composed of the smc-1 and smc-3 heterodimer attached via their SMC hinge domain, scc-1 which links them, and scc-3. Interacts with scc-1, smc-1 and tim-1.

Its subcellular location is the nucleus. The protein localises to the chromosome. Involved in chromosome cohesion during cell cycle and in DNA repair. Involved in the repair of double strand breaks during mitosis and meiosis. Required for chromosome segregation during mitosis. Central component of cohesin complex. The cohesin complex is required for the cohesion of sister chromatids after DNA replication. The cohesin complex apparently forms a large proteinaceous ring within which sister chromatids can be trapped. At anaphase, the complex is cleaved and dissociates from chromatin, allowing sister chromatids to segregate. Required for the localization of lab-1 to meiotic and mitotic chromosomes. The protein is Structural maintenance of chromosomes protein 3 of Caenorhabditis elegans.